The sequence spans 212 residues: Pyridoxine/pyridoxamine 5'-phosphate oxidase (212 aa).

Substrate contacts are provided by residues 8-11 (RREY) and K66. Residues 61 to 66 (RIVLLK), 76 to 77 (FT), R82, K83, and Q105 contribute to the FMN site. Residues Y123, R127, and S131 each contribute to the substrate site. Residues 140–141 (QS) and W185 each bind FMN. 191 to 193 (RLH) contacts substrate. Residue R195 coordinates FMN.

Belongs to the pyridoxamine 5'-phosphate oxidase family. As to quaternary structure, homodimer. It depends on FMN as a cofactor.

It catalyses the reaction pyridoxamine 5'-phosphate + O2 + H2O = pyridoxal 5'-phosphate + H2O2 + NH4(+). It carries out the reaction pyridoxine 5'-phosphate + O2 = pyridoxal 5'-phosphate + H2O2. It functions in the pathway cofactor metabolism; pyridoxal 5'-phosphate salvage; pyridoxal 5'-phosphate from pyridoxamine 5'-phosphate: step 1/1. Its pathway is cofactor metabolism; pyridoxal 5'-phosphate salvage; pyridoxal 5'-phosphate from pyridoxine 5'-phosphate: step 1/1. Catalyzes the oxidation of either pyridoxine 5'-phosphate (PNP) or pyridoxamine 5'-phosphate (PMP) into pyridoxal 5'-phosphate (PLP). The protein is Pyridoxine/pyridoxamine 5'-phosphate oxidase of Shewanella pealeana (strain ATCC 700345 / ANG-SQ1).